Reading from the N-terminus, the 288-residue chain is MQQSTLLKPVSCYGIGVHSGKRTQLTIEPTKENTGIIFIRTDISSENNYIEASYFNVSDTLLSTTISNDHKVQISTIEHLMAALWGCSIDNAIIKIDGPEVPIMDGSSKPFVFMIECAGKKLQNAPKKYLKILKDIKVVHKDCELYCTPSDHMTVDLTIDFSSKAIGRQNLSFRDQESFTKNIADARTFGFIRDVDYLKSKGLAQGASFENAIGIDEQDKILNPNGLRYEDEFVRHKLLDLFGDLYTNGTSIVSAIKGYKTSHALNNELLHRIFSDTTSYKFVTSSEL.

3 residues coordinate Zn(2+): H79, H236, and D240. H263 (proton donor) is an active-site residue.

The protein belongs to the LpxC family. The cofactor is Zn(2+).

The enzyme catalyses a UDP-3-O-[(3R)-3-hydroxyacyl]-N-acetyl-alpha-D-glucosamine + H2O = a UDP-3-O-[(3R)-3-hydroxyacyl]-alpha-D-glucosamine + acetate. It functions in the pathway glycolipid biosynthesis; lipid IV(A) biosynthesis; lipid IV(A) from (3R)-3-hydroxytetradecanoyl-[acyl-carrier-protein] and UDP-N-acetyl-alpha-D-glucosamine: step 2/6. Functionally, catalyzes the hydrolysis of UDP-3-O-myristoyl-N-acetylglucosamine to form UDP-3-O-myristoylglucosamine and acetate, the committed step in lipid A biosynthesis. This Rickettsia conorii (strain ATCC VR-613 / Malish 7) protein is UDP-3-O-acyl-N-acetylglucosamine deacetylase.